The chain runs to 433 residues: tRNA-2-methylthio-N(6)-dimethylallyladenosine synthase (433 aa).

The MTTase N-terminal domain occupies 3 to 118 (KKLFIQTLGC…ITKAVNTPKF (116 aa)). [4Fe-4S] cluster contacts are provided by cysteine 12, cysteine 49, cysteine 81, cysteine 150, cysteine 154, and cysteine 157. The 234-residue stretch at 136–369 (RGSPYKSHIN…QNRHSEILDE (234 aa)) folds into the Radical SAM core domain. The region spanning 372 to 433 (AAQKDKIFDV…RMVLYGELQI (62 aa)) is the TRAM domain.

This sequence belongs to the methylthiotransferase family. MiaB subfamily. As to quaternary structure, monomer. It depends on [4Fe-4S] cluster as a cofactor.

It localises to the cytoplasm. The enzyme catalyses N(6)-dimethylallyladenosine(37) in tRNA + (sulfur carrier)-SH + AH2 + 2 S-adenosyl-L-methionine = 2-methylsulfanyl-N(6)-dimethylallyladenosine(37) in tRNA + (sulfur carrier)-H + 5'-deoxyadenosine + L-methionine + A + S-adenosyl-L-homocysteine + 2 H(+). In terms of biological role, catalyzes the methylthiolation of N6-(dimethylallyl)adenosine (i(6)A), leading to the formation of 2-methylthio-N6-(dimethylallyl)adenosine (ms(2)i(6)A) at position 37 in tRNAs that read codons beginning with uridine. The sequence is that of tRNA-2-methylthio-N(6)-dimethylallyladenosine synthase from Campylobacter concisus (strain 13826).